A 419-amino-acid polypeptide reads, in one-letter code: tRNA modification GTPase MnmE (419 aa).

3 residues coordinate (6S)-5-formyl-5,6,7,8-tetrahydrofolate: R2, E59, and R99. Residues 197 to 343 enclose the TrmE-type G domain; the sequence is GLSVVIAGPP…LHTMIVEMAR (147 aa). N207 is a K(+) binding site. GTP-binding positions include 207 to 212, 226 to 232, and 251 to 254; these read NAGKST, SPVAGTT, and DTAG. S211 contacts Mg(2+). Positions 226, 228, and 231 each coordinate K(+). T232 contacts Mg(2+). (6S)-5-formyl-5,6,7,8-tetrahydrofolate is bound at residue K419.

Belongs to the TRAFAC class TrmE-Era-EngA-EngB-Septin-like GTPase superfamily. TrmE GTPase family. In terms of assembly, homodimer. Heterotetramer of two MnmE and two MnmG subunits. K(+) is required as a cofactor.

The protein resides in the cytoplasm. In terms of biological role, exhibits a very high intrinsic GTPase hydrolysis rate. Involved in the addition of a carboxymethylaminomethyl (cmnm) group at the wobble position (U34) of certain tRNAs, forming tRNA-cmnm(5)s(2)U34. The chain is tRNA modification GTPase MnmE from Sphingopyxis alaskensis (strain DSM 13593 / LMG 18877 / RB2256) (Sphingomonas alaskensis).